The following is a 939-amino-acid chain: Isoleucine--tRNA ligase (939 aa).

A 'HIGH' region motif is present at residues 57–67 (PYANGHIHLGH). Glu-561 is a binding site for L-isoleucyl-5'-AMP. The 'KMSKS' region signature appears at 602–606 (KMSKS). Residue Lys-605 participates in ATP binding. Zn(2+) is bound by residues Cys-903, Cys-906, Cys-923, and Cys-926.

The protein belongs to the class-I aminoacyl-tRNA synthetase family. IleS type 1 subfamily. In terms of assembly, monomer. The cofactor is Zn(2+).

It localises to the cytoplasm. It catalyses the reaction tRNA(Ile) + L-isoleucine + ATP = L-isoleucyl-tRNA(Ile) + AMP + diphosphate. Its function is as follows. Catalyzes the attachment of isoleucine to tRNA(Ile). As IleRS can inadvertently accommodate and process structurally similar amino acids such as valine, to avoid such errors it has two additional distinct tRNA(Ile)-dependent editing activities. One activity is designated as 'pretransfer' editing and involves the hydrolysis of activated Val-AMP. The other activity is designated 'posttransfer' editing and involves deacylation of mischarged Val-tRNA(Ile). This Desulfotalea psychrophila (strain LSv54 / DSM 12343) protein is Isoleucine--tRNA ligase.